The primary structure comprises 490 residues: RNA-binding post-transcriptional regulator cip1 (490 aa).

Disordered regions lie at residues 16-63, 76-97, and 138-199; these read RGLA…GSSA, ASSRAASPAPSDSFPTFGYSQL, and HNVS…GEDT. The span at 34–62 shows a compositional bias: polar residues; that stretch reads RLQSPLNSPKLQPIGSPQASRKTSGSGSS. Phosphoserine is present on residues Ser-37, Ser-41, Ser-49, Ser-86, and Ser-141. Composition is skewed to low complexity over residues 76–88 and 141–160; these read ASSRAASPAPSDS and SPPSGAESSSESKSFSASGK. Residues 164–192 show a composition bias toward polar residues; the sequence is ADTSAEPSLDAFNSTQIKAGSTANSNSTP. The 79-residue stretch at 202–280 folds into the RRM domain; sequence TAIVVKNIPF…RRLRVEWKRQ (79 aa). Phosphoserine is present on residues Ser-397, Ser-401, and Ser-427. Thr-431 carries the phosphothreonine modification. Ser-435, Ser-456, and Ser-466 each carry phosphoserine. The disordered stretch occupies residues 457–490; the sequence is PLQKASTLSSPFNSKNDNDASTSASKQSFGVSHF.

Interacts with csx1. Phosphorylated by sty1.

Its subcellular location is the cytoplasm. Regulates global gene expression after oxidative stress. Interacts and stabilizes mRNAs and may regulate their transition between different cytoplasmic components after oxidative stress. The sequence is that of RNA-binding post-transcriptional regulator cip1 (cip1) from Schizosaccharomyces pombe (strain 972 / ATCC 24843) (Fission yeast).